The chain runs to 3573 residues: Zinc finger homeobox protein 4 (3573 aa).

Residues 1–28 (METCDSPTISRQENGQSTSKLCGTTQLD) show a composition bias toward polar residues. 3 disordered regions span residues 1-54 (METC…LRTD), 425-479 (LSHS…DTYS), and 522-606 (TSSS…GSPG). Composition is skewed to basic and acidic residues over residues 39-54 (EPDRENSSTDDNLRTD) and 434-452 (KLSESKDQENNCERQKETN). Residues 468-479 (EPVEEEDEDTYS) show a composition bias toward acidic residues. Over residues 585–599 (SVTPHQHSFTPSTPS) the composition is skewed to polar residues. 3 C2H2-type zinc fingers span residues 609–632 (IECPKCDTVLGSSRSLGGHMTMMH), 640–663 (LKCPKCNWHYKYQQTLEAHMKEKH), and 695–719 (FRCEVCNYSTTTKGNLSIHMQSDKH). The C2H2-type 4; degenerate zinc finger occupies 763 to 785 (WRCEVCDYETNVARNLRIHMTSE). 3 consecutive C2H2-type zinc fingers follow at residues 913 to 937 (YQCKLCNYNTQLKANFQLHCKTDKH), 969 to 991 (LKCNACDYYTNSVDKLRLHTTNH), and 1017 to 1041 (YYCALCDYSTKVKLNLVQHVRSVKH). Residues 1096 to 1132 (GEDTEGSAKSTSVAIGDDKDSSERDNTEAKKSSKDSV) form a disordered region. A compositionally biased stretch (basic and acidic residues) spans 1111 to 1129 (GDDKDSSERDNTEAKKSSK). C2H2-type zinc fingers lie at residues 1168-1191 (YQCPYCNYNSRDPNRIQMHVLSQH) and 1197-1220 (ICCPLCQDVLSNKMHLQLHLTHLH). The segment at 1250-1340 (AASEKSERDT…EQQKKQQLSV (91 aa)) is disordered. The span at 1277 to 1306 (VDEKSTPGTDESKPGMEIKSEEQKPPKESA) shows a compositional bias: basic and acidic residues. Residues 1322 to 1340 (TDSMPDQLNEQQKKQQLSV) are compositionally biased toward polar residues. C2H2-type zinc fingers lie at residues 1348–1370 (YRCNHCSLAFKTMQKLQIHSQYH) and 1376–1399 (TMCSLCQRSFRTFQALKKHLEAGH). The tract at residues 1442–1476 (YEMEQEGKASPVGSDSSSIPDDMGSEPKRTLPFRK) is disordered. 2 consecutive C2H2-type zinc fingers follow at residues 1492–1518 (YKCTVCKESFTQKNILLVHYNSVSHLH) and 1544–1568 (YKCSICNVAYSQSSTLEIHMRSVLH). 2 disordered regions span residues 1577–1596 (LEPSGNISSGNSVAGNVNSP) and 1795–1843 (YKES…IASG). Residues 1580 to 1596 (SGNISSGNSVAGNVNSP) are compositionally biased toward low complexity. The span at 1795–1830 (YKESEEISEKQEKPKQEFTNESEGLKENKDMKKPKS) shows a compositional bias: basic and acidic residues. The C2H2-type 14 zinc-finger motif lies at 1886–1909 (LECGTCSKLFSNILILKSHQEHVH). The interval 1933 to 2013 (YPISPSSPET…PSAPPQVQLP (81 aa)) is disordered. Composition is skewed to pro residues over residues 1940-1962 (PETPPPPPPPPPPPPPPPPPTPS) and 1980-2007 (LQAPPPTPPPPPPPPPPPPPPPPPPSAP). DNA-binding regions (homeobox) lie at residues 2072 to 2131 (FKRP…RQRN) and 2169 to 2228 (KRSS…RKSY). The segment at 2255–2279 (YQCKKCSVVFPRIFDLITHQKKQCY) adopts a C2H2-type 15; degenerate zinc-finger fold. Disordered stretches follow at residues 2278 to 2300 (CYKDEDDDAQDESQTEDSMDASD) and 2318 to 2426 (SLAV…TPLQ). A compositionally biased stretch (acidic residues) spans 2281-2297 (DEDDDAQDESQTEDSMD). Residues 2318–2334 (SLAVTAASSGSGSSTPL) show a composition bias toward low complexity. Over residues 2340-2357 (PEPEKASPKSESTEKPKP) the composition is skewed to basic and acidic residues. Composition is skewed to low complexity over residues 2360–2373 (TISKQTDTTSQSSK) and 2382–2413 (PSDPQPSASQPQQQKQSQIIGRPPSTSQTTPV). A C2H2-type 16 zinc finger spans residues 2436–2458 (YQCDQCTVAFPTLELWQEHQHMH). Over residues 2499 to 2509 (LAQMPPQTGSS) the composition is skewed to polar residues. Positions 2499–2553 (LAQMPPQTGSSHAAHPATVSGSMKRKLDDKEDNNCSEKEGGNSGEDQHRDKRLRT) are disordered. Over residues 2523-2547 (RKLDDKEDNNCSEKEGGNSGEDQHR) the composition is skewed to basic and acidic residues. The homeobox 3 DNA-binding region spans 2548–2607 (DKRLRTTITPEQLEILYEKYLLDSNPTRKMLDHIAREVGLKKRVVQVWFQNTRARERKGQ). Residues 2618-2641 (KRCPFCRALFKAKSALESHIRSRH) form a C2H2-type 17 zinc finger. Disordered regions lie at residues 2704–2788 (EMSP…PKPL) and 2820–2875 (FSEK…PGHK). 2 stretches are compositionally biased toward polar residues: residues 2709–2718 (NLLSPSSFKA) and 2746–2773 (TSSINTAISDATTGDEGNNEMESTTGSS). Positions 2820 to 2829 (FSEKDGDHDQ) are enriched in basic and acidic residues. Positions 2874–2933 (HKRFRTQMSNLQLKVLKACFSDYRTPTMQECEMLGNEIGLPKRVVQVWFQNARAKEKKFK) form a DNA-binding region, homeobox 4. The C2H2-type 18; degenerate zinc-finger motif lies at 2952-2976 (PECSLCGVKYSARLSIRDHIFSKQH). 2 disordered regions span residues 3060-3174 (PSSL…KHLK) and 3287-3343 (LQKQ…LDSK). The span at 3084–3104 (PTSATSSPALSLSSAPSKPLL) shows a compositional bias: low complexity. The span at 3105–3129 (QTPPPPPPPPPPPPPPPPPPPPPPS) shows a compositional bias: pro residues. The span at 3159-3174 (IKEEELEANKPEKHLK) shows a compositional bias: basic and acidic residues. The stretch at 3271-3316 (ALLQQYQQYQQNLQDSLQKQQKQQQEQQQKQVQAKSSKAENDQQQN) forms a coiled coil. Residues 3287-3305 (LQKQQKQQQEQQQKQVQAK) show a composition bias toward low complexity. Positions 3321 to 3343 (SETKEDRSSATESTKEEPQLDSK) are enriched in basic and acidic residues. A C2H2-type 19; degenerate zinc finger spans residues 3360-3384 (FICRKCQMMFTDEDAAVNHQKSFCY). The segment at 3404 to 3428 (YQCLACDVAISGNEALSQHLQSSLH) adopts a C2H2-type 20 zinc-finger fold. Disordered stretches follow at residues 3449-3468 (HSVCSPNPNTTSTSQSAASS) and 3518-3543 (TSGVQTSLPTESCSDESDSELSQKLE). Over residues 3453-3468 (SPNPNTTSTSQSAASS) the composition is skewed to low complexity.

It belongs to the krueppel C2H2-type zinc-finger protein family.

The protein resides in the nucleus. May play a role in neural and muscle differentiation. May be involved in transcriptional regulation. In Gallus gallus (Chicken), this protein is Zinc finger homeobox protein 4 (ZFHX4).